A 292-amino-acid chain; its full sequence is Intermediate transcription factor 3 small subunit (292 aa).

It belongs to the orthopoxvirus OPG134 family. Heterodimer of a 45 kDa (A23R) and a 32 kDa (A8R) subunit to form the virus intermediate transcription factor (VITF)-3.

In terms of biological role, acts with RNA polymerase to initiate transcription from intermediate gene promoters. The chain is Intermediate transcription factor 3 small subunit (OPG134) from Monkeypox virus.